The chain runs to 480 residues: Glycogen synthase (480 aa).

ADP-alpha-D-glucose is bound at residue Lys-15.

The protein belongs to the glycosyltransferase 1 family. Bacterial/plant glycogen synthase subfamily.

The catalysed reaction is [(1-&gt;4)-alpha-D-glucosyl](n) + ADP-alpha-D-glucose = [(1-&gt;4)-alpha-D-glucosyl](n+1) + ADP + H(+). Its pathway is glycan biosynthesis; glycogen biosynthesis. In terms of biological role, synthesizes alpha-1,4-glucan chains using ADP-glucose. This chain is Glycogen synthase, found in Rhizobium johnstonii (strain DSM 114642 / LMG 32736 / 3841) (Rhizobium leguminosarum bv. viciae).